The chain runs to 369 residues: Aminomethyltransferase (369 aa).

It belongs to the GcvT family. In terms of assembly, the glycine cleavage system is composed of four proteins: P, T, L and H.

It carries out the reaction N(6)-[(R)-S(8)-aminomethyldihydrolipoyl]-L-lysyl-[protein] + (6S)-5,6,7,8-tetrahydrofolate = N(6)-[(R)-dihydrolipoyl]-L-lysyl-[protein] + (6R)-5,10-methylene-5,6,7,8-tetrahydrofolate + NH4(+). Functionally, the glycine cleavage system catalyzes the degradation of glycine. The polypeptide is Aminomethyltransferase (Xanthomonas oryzae pv. oryzae (strain PXO99A)).